A 1363-amino-acid chain; its full sequence is DNA-directed RNA polymerase subunit beta' (1363 aa).

Residues 1–39 (MTSTPSKSRKSSKGSKAAKAAASAPETRPLAKTPPPFRN) are disordered. Over residues 14-24 (GSKAAKAAASA) the composition is skewed to low complexity. Cys-248, Cys-315, Cys-322, and Cys-325 together coordinate Zn(2+).

The protein belongs to the RNA polymerase beta' chain family. RpoC2 subfamily. In cyanobacteria the RNAP catalytic core is composed of 2 alpha, 1 beta, 1 beta', 1 gamma and 1 omega subunit. When a sigma factor is associated with the core the holoenzyme is formed, which can initiate transcription. Requires Zn(2+) as cofactor.

The enzyme catalyses RNA(n) + a ribonucleoside 5'-triphosphate = RNA(n+1) + diphosphate. Its function is as follows. DNA-dependent RNA polymerase catalyzes the transcription of DNA into RNA using the four ribonucleoside triphosphates as substrates. This Synechococcus sp. (strain WH7803) protein is DNA-directed RNA polymerase subunit beta'.